The sequence spans 274 residues: NH(3)-dependent NAD(+) synthetase (274 aa).

Residue 46–53 participates in ATP binding; sequence GISGGQDS. Asp52 is a Mg(2+) binding site. Arg140 contributes to the deamido-NAD(+) binding site. Thr160 provides a ligand contact to ATP. Mg(2+) is bound at residue Glu165. Positions 173 and 180 each coordinate deamido-NAD(+). Lys189 and Thr211 together coordinate ATP. 260–261 serves as a coordination point for deamido-NAD(+); sequence HK.

The protein belongs to the NAD synthetase family. As to quaternary structure, homodimer.

It catalyses the reaction deamido-NAD(+) + NH4(+) + ATP = AMP + diphosphate + NAD(+) + H(+). It participates in cofactor biosynthesis; NAD(+) biosynthesis; NAD(+) from deamido-NAD(+) (ammonia route): step 1/1. In terms of biological role, catalyzes the ATP-dependent amidation of deamido-NAD to form NAD. Uses ammonia as a nitrogen source. In Listeria monocytogenes serotype 4b (strain CLIP80459), this protein is NH(3)-dependent NAD(+) synthetase.